Reading from the N-terminus, the 468-residue chain is Siroheme synthase 1 (468 aa).

The interval methionine 1–alanine 204 is precorrin-2 dehydrogenase /sirohydrochlorin ferrochelatase. NAD(+) contacts are provided by residues glutamate 22–valine 23 and proline 43–alanine 44. Serine 128 is modified (phosphoserine). The tract at residues glycine 216–alanine 468 is uroporphyrinogen-III C-methyltransferase. Position 225 (proline 225) interacts with S-adenosyl-L-methionine. Aspartate 248 (proton acceptor) is an active-site residue. The active-site Proton donor is lysine 270. S-adenosyl-L-methionine is bound by residues glycine 301 to aspartate 303, isoleucine 306, threonine 331 to alanine 332, methionine 383, and glycine 412.

This sequence in the N-terminal section; belongs to the precorrin-2 dehydrogenase / sirohydrochlorin ferrochelatase family. The protein in the C-terminal section; belongs to the precorrin methyltransferase family.

It catalyses the reaction uroporphyrinogen III + 2 S-adenosyl-L-methionine = precorrin-2 + 2 S-adenosyl-L-homocysteine + H(+). The enzyme catalyses precorrin-2 + NAD(+) = sirohydrochlorin + NADH + 2 H(+). It carries out the reaction siroheme + 2 H(+) = sirohydrochlorin + Fe(2+). Its pathway is cofactor biosynthesis; adenosylcobalamin biosynthesis; precorrin-2 from uroporphyrinogen III: step 1/1. It functions in the pathway cofactor biosynthesis; adenosylcobalamin biosynthesis; sirohydrochlorin from precorrin-2: step 1/1. It participates in porphyrin-containing compound metabolism; siroheme biosynthesis; precorrin-2 from uroporphyrinogen III: step 1/1. The protein operates within porphyrin-containing compound metabolism; siroheme biosynthesis; siroheme from sirohydrochlorin: step 1/1. Its pathway is porphyrin-containing compound metabolism; siroheme biosynthesis; sirohydrochlorin from precorrin-2: step 1/1. Functionally, multifunctional enzyme that catalyzes the SAM-dependent methylations of uroporphyrinogen III at position C-2 and C-7 to form precorrin-2 via precorrin-1. Then it catalyzes the NAD-dependent ring dehydrogenation of precorrin-2 to yield sirohydrochlorin. Finally, it catalyzes the ferrochelation of sirohydrochlorin to yield siroheme. The polypeptide is Siroheme synthase 1 (Aeromonas salmonicida (strain A449)).